The primary structure comprises 428 residues: Small ribosomal subunit protein uS2m (428 aa).

Positions 30–50 (FLSQDNFTAPPPPPTNSKKQA) are disordered.

This sequence belongs to the universal ribosomal protein uS2 family. In terms of assembly, component of the mitochondrial small ribosomal subunit (mt-SSU). Mature N.crassa 74S mitochondrial ribosomes consist of a small (37S) and a large (54S) subunit. The 37S small subunit contains a 16S ribosomal RNA (16S mt-rRNA) and 32 different proteins. The 54S large subunit contains a 23S rRNA (23S mt-rRNA) and 42 different proteins.

Its subcellular location is the mitochondrion. Component of the mitochondrial ribosome (mitoribosome), a dedicated translation machinery responsible for the synthesis of mitochondrial genome-encoded proteins, including at least some of the essential transmembrane subunits of the mitochondrial respiratory chain. The mitoribosomes are attached to the mitochondrial inner membrane and translation products are cotranslationally integrated into the membrane. The polypeptide is Small ribosomal subunit protein uS2m (mrp4) (Neurospora crassa (strain ATCC 24698 / 74-OR23-1A / CBS 708.71 / DSM 1257 / FGSC 987)).